Consider the following 244-residue polypeptide: Probable proteasome subunit alpha type-1 (244 aa).

The protein belongs to the peptidase T1A family. The 26S proteasome consists of a 20S proteasome core and two 19S regulatory subunits. The 20S proteasome core is composed of 28 subunits that are arranged in four stacked rings, resulting in a barrel-shaped structure. The two end rings are each formed by seven alpha subunits, and the two central rings are each formed by seven beta subunits. The catalytic chamber with the active sites is on the inside of the barrel.

It is found in the cytoplasm. The protein resides in the nucleus. Its function is as follows. The proteasome is a multicatalytic proteinase complex which is characterized by its ability to cleave peptides with Arg, Phe, Tyr, Leu, and Glu adjacent to the leaving group at neutral or slightly basic pH. The proteasome has an ATP-dependent proteolytic activity. The sequence is that of Probable proteasome subunit alpha type-1 from Schizosaccharomyces pombe (strain 972 / ATCC 24843) (Fission yeast).